The sequence spans 343 residues: Sulfate/thiosulfate import ATP-binding protein CysA (343 aa).

One can recognise an ABC transporter domain in the interval 3–237 (IRISHLRKQF…PASPFVYSFV (235 aa)). 35-42 (GPSGSGKT) serves as a coordination point for ATP.

This sequence belongs to the ABC transporter superfamily. Sulfate/tungstate importer (TC 3.A.1.6) family. In terms of assembly, the complex is composed of two ATP-binding proteins (CysA), two transmembrane proteins (CysT and CysW) and a solute-binding protein (CysP).

It localises to the cell inner membrane. The catalysed reaction is sulfate(out) + ATP + H2O = sulfate(in) + ADP + phosphate + H(+). It catalyses the reaction thiosulfate(out) + ATP + H2O = thiosulfate(in) + ADP + phosphate + H(+). Part of the ABC transporter complex CysAWTP involved in sulfate/thiosulfate import. Responsible for energy coupling to the transport system. The sequence is that of Sulfate/thiosulfate import ATP-binding protein CysA from Xanthomonas campestris pv. campestris (strain ATCC 33913 / DSM 3586 / NCPPB 528 / LMG 568 / P 25).